Reading from the N-terminus, the 397-residue chain is CCA-adding enzyme (397 aa).

Residues G27 and R30 each coordinate ATP. Positions 27 and 30 each coordinate CTP. Positions 40 and 42 each coordinate Mg(2+). Residues R111, D154, R157, R160, and R163 each coordinate ATP. Residues R111, D154, R157, R160, and R163 each coordinate CTP.

The protein belongs to the tRNA nucleotidyltransferase/poly(A) polymerase family. Bacterial CCA-adding enzyme type 3 subfamily. In terms of assembly, homodimer. It depends on Mg(2+) as a cofactor.

The catalysed reaction is a tRNA precursor + 2 CTP + ATP = a tRNA with a 3' CCA end + 3 diphosphate. It catalyses the reaction a tRNA with a 3' CCA end + 2 CTP + ATP = a tRNA with a 3' CCACCA end + 3 diphosphate. Catalyzes the addition and repair of the essential 3'-terminal CCA sequence in tRNAs without using a nucleic acid template. Adds these three nucleotides in the order of C, C, and A to the tRNA nucleotide-73, using CTP and ATP as substrates and producing inorganic pyrophosphate. Has no poly(A) polymerase activity. This Bacillus subtilis (strain 168) protein is CCA-adding enzyme.